The following is a 257-amino-acid chain: Acyl-[acyl-carrier-protein]--UDP-N-acetylglucosamine O-acyltransferase (257 aa).

It belongs to the transferase hexapeptide repeat family. LpxA subfamily. In terms of assembly, homotrimer.

It localises to the cytoplasm. It carries out the reaction a (3R)-hydroxyacyl-[ACP] + UDP-N-acetyl-alpha-D-glucosamine = a UDP-3-O-[(3R)-3-hydroxyacyl]-N-acetyl-alpha-D-glucosamine + holo-[ACP]. Its pathway is glycolipid biosynthesis; lipid IV(A) biosynthesis; lipid IV(A) from (3R)-3-hydroxytetradecanoyl-[acyl-carrier-protein] and UDP-N-acetyl-alpha-D-glucosamine: step 1/6. Its function is as follows. Involved in the biosynthesis of lipid A, a phosphorylated glycolipid that anchors the lipopolysaccharide to the outer membrane of the cell. This chain is Acyl-[acyl-carrier-protein]--UDP-N-acetylglucosamine O-acyltransferase, found in Anaeromyxobacter dehalogenans (strain 2CP-1 / ATCC BAA-258).